Consider the following 351-residue polypeptide: E3 ubiquitin-protein ligase TRIM63 (351 aa).

The segment at 23-79 adopts an RING-type zinc-finger fold; the sequence is CPICLEMFTKPVVILPCQHNLCRKCANDIFQAANPYWTNRGGSVSMSGGRFRCPSCR. Positions 74 to 218 are interaction with TTN; it reads RCPSCRHEVI…LSHKFDALYA (145 aa). The B box-type zinc finger occupies 117–159; sequence GSHPMCKEHEDEKINIYCLTCEVPTCSLCKVFGAHQACEVAPL. Positions 122, 125, 145, and 151 each coordinate Zn(2+). The stretch at 189 to 269 forms a coiled coil; that stretch reads SQLEDSCRVT…VETAIQSLDE (81 aa). The COS domain occupies 267-325; that stretch reads LDEPGGATFLLSAKPLIKSIVEASKGCQLGKTEQGFENMDYFTLNLEHIAEALRAIDFG. Residues 326-345 are compositionally biased toward acidic residues; that stretch reads TDEEEEFTEEEEEEDQEEGV. Positions 326-351 are disordered; it reads TDEEEEFTEEEEEEDQEEGVSTEGHQ.

As to quaternary structure, homodimer. Homooligomer and heterooligomer. Interacts with SUMO2, titin/TTN and GMEB1. Interacts with TRIM54 and probably with TRIM55 and TNNI3. Forms a ternary complex with RACK1 and PRKCE. Interacts with CKM. In terms of tissue distribution, muscle specific. Selectively expressed in heart and skeletal muscle.

The protein localises to the cytoplasm. It localises to the nucleus. It is found in the myofibril. Its subcellular location is the sarcomere. The protein resides in the m line. The protein localises to the z line. The enzyme catalyses S-ubiquitinyl-[E2 ubiquitin-conjugating enzyme]-L-cysteine + [acceptor protein]-L-lysine = [E2 ubiquitin-conjugating enzyme]-L-cysteine + N(6)-ubiquitinyl-[acceptor protein]-L-lysine.. Its pathway is protein modification; protein ubiquitination. Its function is as follows. E3 ubiquitin ligase. Mediates the ubiquitination and subsequent proteasomal degradation of CKM, GMEB1 and HIBADH. Regulates the proteasomal degradation of muscle proteins under amino acid starvation, where muscle protein is catabolized to provide other organs with amino acids. Inhibits de novo skeletal muscle protein synthesis under amino acid starvation. Regulates proteasomal degradation of cardiac troponin I/TNNI3 and probably of other sarcomeric-associated proteins. May play a role in striated muscle atrophy and hypertrophy by regulating an anti-hypertrophic PKC-mediated signaling pathway. May regulate the organization of myofibrils through TTN in muscle cells. The sequence is that of E3 ubiquitin-protein ligase TRIM63 (Trim63) from Rattus norvegicus (Rat).